The sequence spans 416 residues: Queuine tRNA-ribosyltransferase accessory subunit 2 (416 aa).

Positions 350, 352, 355, and 381 each coordinate Zn(2+).

Belongs to the queuine tRNA-ribosyltransferase family. QTRT2 subfamily. In terms of assembly, heterodimer of a catalytic subunit qtrt1 and an accessory subunit qtrt2. Requires Zn(2+) as cofactor.

The protein localises to the cytoplasm. It localises to the mitochondrion outer membrane. Non-catalytic subunit of the queuine tRNA-ribosyltransferase (TGT) that catalyzes the base-exchange of a guanine (G) residue with queuine (Q) at position 34 (anticodon wobble position) in tRNAs with GU(N) anticodons (tRNA-Asp, -Asn, -His and -Tyr), resulting in the hypermodified nucleoside queuosine (7-(((4,5-cis-dihydroxy-2-cyclopenten-1-yl)amino)methyl)-7-deazaguanosine). This chain is Queuine tRNA-ribosyltransferase accessory subunit 2, found in Danio rerio (Zebrafish).